Reading from the N-terminus, the 289-residue chain is Oxaloacetate decarboxylase 1 (289 aa).

S50 lines the substrate pocket. Residue D88 coordinates Mg(2+). Residues R159 and H235 each coordinate substrate.

Belongs to the isocitrate lyase/PEP mutase superfamily. Oxaloacetate decarboxylase family. As to quaternary structure, homotetramer; dimer of dimers. The cofactor is Mg(2+).

The catalysed reaction is oxaloacetate + H(+) = pyruvate + CO2. Its function is as follows. Catalyzes the decarboxylation of oxaloacetate into pyruvate. Seems to play a role in maintaining cellular concentrations of bicarbonate and pyruvate. This Pseudomonas putida (strain W619) protein is Oxaloacetate decarboxylase 1.